A 380-amino-acid polypeptide reads, in one-letter code: 4-hydroxy-3-methylbut-2-en-1-yl diphosphate synthase (flavodoxin) (380 aa).

Positions 280, 283, 315, and 322 each coordinate [4Fe-4S] cluster.

It belongs to the IspG family. The cofactor is [4Fe-4S] cluster.

The catalysed reaction is (2E)-4-hydroxy-3-methylbut-2-enyl diphosphate + oxidized [flavodoxin] + H2O + 2 H(+) = 2-C-methyl-D-erythritol 2,4-cyclic diphosphate + reduced [flavodoxin]. It participates in isoprenoid biosynthesis; isopentenyl diphosphate biosynthesis via DXP pathway; isopentenyl diphosphate from 1-deoxy-D-xylulose 5-phosphate: step 5/6. Its function is as follows. Converts 2C-methyl-D-erythritol 2,4-cyclodiphosphate (ME-2,4cPP) into 1-hydroxy-2-methyl-2-(E)-butenyl 4-diphosphate. This Cutibacterium acnes (strain DSM 16379 / KPA171202) (Propionibacterium acnes) protein is 4-hydroxy-3-methylbut-2-en-1-yl diphosphate synthase (flavodoxin).